The primary structure comprises 346 residues: Enoyl-[acyl-carrier-protein] reductase, mitochondrial (346 aa).

The N-terminal 22 residues, 1–22, are a transit peptide targeting the mitochondrion; sequence MQKTIRSQALIYRKFGDPLKVL. Tyr59 acts as the Proton donor in catalysis. NADP(+) contacts are provided by residues Asn131, 157-160, 180-182, 249-252, 274-276, and Lys332; these read NSGV, RNR, YGGM, and VAV.

It belongs to the zinc-containing alcohol dehydrogenase family. Quinone oxidoreductase subfamily. In terms of assembly, homodimer.

It localises to the mitochondrion. The enzyme catalyses a 2,3-saturated acyl-[ACP] + NADP(+) = a (2E)-enoyl-[ACP] + NADPH + H(+). Its function is as follows. Catalyzes the NADPH-dependent reduction of trans-2-enoyl thioesters in mitochondrial fatty acid synthesis (fatty acid synthesis type II). Fatty acid chain elongation in mitochondria uses acyl carrier protein (ACP) as an acyl group carrier, but the enzyme accepts both ACP and CoA thioesters as substrates in vitro. May provide the octanoyl chain used for lipoic acid biosynthesis, regulating protein lipoylation and mitochondrial respiratory activity. Involved in iron homeostasis; affecting Fe-S cluster assembly and ceramide metabolism. Required for proper morphology and bioenergetic functions of mitochondria. Required for maintenance of neurons. The protein is Enoyl-[acyl-carrier-protein] reductase, mitochondrial of Caenorhabditis elegans.